A 255-amino-acid polypeptide reads, in one-letter code: GDIHGQYQDLLRLFEYGGYPPSANFLFLGDYVDRGKQSLETICLLLAYKIRYPSKIYLLRGNHEDAKINRIYGFYDECKRRFNVRLWKIFTDCFNCLPVAALIDDKILCMHGGLSPELDNLNQIREIQRPTEIPDSGLLCDLLWSDPDQKIEGWADSDRGISCTFGADKVAEFLDKNDLDLICRGHQVVEDGYEFFAKRRLVTIFSAPNYGGEFDNAGALLSVDESLVCSFEIMKPALASSSGHPLKKVPKMGKS.

The Mn(2+) site is built by D2, H4, D30, and N62. The active-site Proton donor is the H63. Mn(2+)-binding residues include H111 and H186.

This sequence belongs to the PPP phosphatase family. PP-1 subfamily. The cofactor is Mn(2+).

It catalyses the reaction O-phospho-L-seryl-[protein] + H2O = L-seryl-[protein] + phosphate. It carries out the reaction O-phospho-L-threonyl-[protein] + H2O = L-threonyl-[protein] + phosphate. The protein is Serine/threonine-protein phosphatase PP1 of Brassica napus (Rape).